A 517-amino-acid polypeptide reads, in one-letter code: Aldehyde dehydrogenase X, mitochondrial (517 aa).

A mitochondrion-targeting transit peptide spans 1–17 (MLRFLAPRLLSLQGRTA). An N6-acetyllysine modification is found at Lys51. Position 52 is an N6-acetyllysine; alternate (Lys52). Lys52 carries the post-translational modification N6-succinyllysine; alternate. N6-succinyllysine is present on Lys81. 262-267 (GSTEVG) contacts NAD(+). Glu285 acts as the Proton acceptor in catalysis. Cys319 (nucleophile) is an active-site residue. Residues Lys364, Lys383, Lys399, Lys414, and Lys426 each carry the N6-acetyllysine; alternate modification. 5 positions are modified to N6-succinyllysine; alternate: Lys364, Lys383, Lys399, Lys414, and Lys426. Lys429 is subject to N6-acetyllysine.

Belongs to the aldehyde dehydrogenase family. In terms of assembly, homotetramer. As to expression, liver, testis and to a lesser extent in brain.

It is found in the mitochondrion matrix. It catalyses the reaction an aldehyde + NAD(+) + H2O = a carboxylate + NADH + 2 H(+). Its pathway is alcohol metabolism; ethanol degradation; acetate from ethanol: step 2/2. ALDHs play a major role in the detoxification of alcohol-derived acetaldehyde. They are involved in the metabolism of corticosteroids, biogenic amines, neurotransmitters, and lipid peroxidation. This chain is Aldehyde dehydrogenase X, mitochondrial (ALDH1B1), found in Homo sapiens (Human).